The primary structure comprises 164 residues: UPF0305 protein MJ0646 (164 aa).

This sequence belongs to the UPF0305 family.

In Methanocaldococcus jannaschii (strain ATCC 43067 / DSM 2661 / JAL-1 / JCM 10045 / NBRC 100440) (Methanococcus jannaschii), this protein is UPF0305 protein MJ0646.